Here is a 178-residue protein sequence, read N- to C-terminus: Interleukin-17B (178 aa).

Residues 1 to 22 form the signal peptide; sequence MDWPHSLLFLLAISIFLGPSQP. Residues 21-44 form a disordered region; it reads QPRNTKGKRKGQVRPGPLAPGPHQ. An N-linked (GlcNAc...) asparagine glycan is attached at asparagine 75. 2 disulfide bridges follow: cysteine 121–cysteine 176 and cysteine 126–cysteine 178.

Belongs to the IL-17 family.

It localises to the secreted. Functionally, stimulates the release of tumor necrosis factor alpha and IL-1-beta from the monocytic cell line THP-1. The protein is Interleukin-17B (IL17B) of Mesocricetus auratus (Golden hamster).